A 541-amino-acid polypeptide reads, in one-letter code: Protein yellow (541 aa).

The signal sequence occupies residues 1 to 21; sequence MFQDKGWILVTLITLVTPSWA. Residues N144 and N215 are each glycosylated (N-linked (GlcNAc...) asparagine). The disordered stretch occupies residues 443-463; it reads QKPQTSWASSPPPPSRTYLPA.

This sequence belongs to the major royal jelly protein family.

The protein localises to the secreted. Its function is as follows. Controls the pigmentation pattern of the adult cuticle and larval mouth parts. The chain is Protein yellow (y) from Drosophila mauritiana (Fruit fly).